The chain runs to 1117 residues: Protein rliB (1117 aa).

An N-terminal signal peptide occupies residues 1 to 23 (MKNINNKILKIFILFLAICSVKS). 4 N-linked (GlcNAc...) asparagine glycosylation sites follow: asparagine 136, asparagine 195, asparagine 279, and asparagine 318. One can recognise a G8 domain in the interval 266-392 (STWSNNLVPQ…YHNSWTKLAS (127 aa)). PbH1 repeat units follow at residues 522–544 (VQKS…TIHG) and 545–567 (TNNL…YLED). Asparagine 547 and asparagine 605 each carry an N-linked (GlcNAc...) asparagine glycan. The PbH1 3 repeat unit spans residues 621-642 (NAYNTIIGNSASGGWAGFSFPN). Asparagine 728, asparagine 845, asparagine 1030, asparagine 1044, asparagine 1091, and asparagine 1107 each carry an N-linked (GlcNAc...) asparagine glycan.

Belongs to the comF family.

It is found in the secreted. The protein is Protein rliB (rliB) of Dictyostelium discoideum (Social amoeba).